The primary structure comprises 574 residues: Arginine--tRNA ligase (574 aa).

A 'HIGH' region motif is present at residues 124–134; the sequence is ANPNGPLHIGH.

The protein belongs to the class-I aminoacyl-tRNA synthetase family.

The protein localises to the cytoplasm. The catalysed reaction is tRNA(Arg) + L-arginine + ATP = L-arginyl-tRNA(Arg) + AMP + diphosphate. The protein is Arginine--tRNA ligase of Methanococcus aeolicus (strain ATCC BAA-1280 / DSM 17508 / OCM 812 / Nankai-3).